Consider the following 140-residue polypeptide: Transcription antitermination protein NusB (140 aa).

The protein belongs to the NusB family.

Its function is as follows. Involved in transcription antitermination. Required for transcription of ribosomal RNA (rRNA) genes. Binds specifically to the boxA antiterminator sequence of the ribosomal RNA (rrn) operons. This chain is Transcription antitermination protein NusB, found in Thermoanaerobacter pseudethanolicus (strain ATCC 33223 / 39E) (Clostridium thermohydrosulfuricum).